The sequence spans 91 residues: Small ribosomal subunit protein uS19 (91 aa).

It belongs to the universal ribosomal protein uS19 family.

Functionally, protein S19 forms a complex with S13 that binds strongly to the 16S ribosomal RNA. In Delftia acidovorans (strain DSM 14801 / SPH-1), this protein is Small ribosomal subunit protein uS19.